The chain runs to 160 residues: Non-secretory ribonuclease (160 aa).

An N-terminal signal peptide occupies residues 1–27 (MVPKLFTSQICLLLLLGLMGVEGSLHA). C-linked (Man) tryptophan glycosylation is present at Trp-34. His-42 acts as the Proton acceptor in catalysis. Residue Asn-44 is glycosylated (N-linked (GlcNAc...) asparagine). Cystine bridges form between Cys-50–Cys-110, Cys-64–Cys-122, Cys-82–Cys-137, and Cys-89–Cys-98. Tyr-60 is subject to 3'-nitrotyrosine. Position 65–69 (65–69 (KNQNT)) interacts with substrate. N-linked (GlcNAc...) asparagine glycans are attached at residues Asn-92, Asn-111, and Asn-138. His-155 (proton donor) is an active-site residue.

This sequence belongs to the pancreatic ribonuclease family. Interacts with and forms a tight 1:1 complex with RNH1. Dimerization of two such complexes may occur.

The protein localises to the lysosome. Its subcellular location is the cytoplasmic granule. It catalyses the reaction an [RNA] containing cytidine + H2O = an [RNA]-3'-cytidine-3'-phosphate + a 5'-hydroxy-ribonucleotide-3'-[RNA].. The catalysed reaction is an [RNA] containing uridine + H2O = an [RNA]-3'-uridine-3'-phosphate + a 5'-hydroxy-ribonucleotide-3'-[RNA].. Functionally, this is a non-secretory ribonuclease. It is a pyrimidine specific nuclease with a slight preference for U. Cytotoxin and helminthotoxin. Possesses a wide variety of biological activities. The chain is Non-secretory ribonuclease (RNASE2) from Macaca fascicularis (Crab-eating macaque).